We begin with the raw amino-acid sequence, 243 residues long: Membrane selenoprotein (243 aa).

The disordered stretch occupies residues 12 to 63 (GEDCEGGVUARPSSSSSSINNASDESTPLISKTNDEEKANIGISSTSNSPQE). A non-standard amino acid (selenocysteine) is located at residue U20. Polar residues-rich tracts occupy residues 30–43 (INNA…LISK) and 53–63 (GISSTSNSPQE). Helical transmembrane passes span 74-94 (ILTL…PVLI), 102-122 (VSAG…LSIL), 144-164 (IKFG…FDIL), and 199-219 (VMGW…LLVG). Residue U88 is a non-standard amino acid, selenocysteine.

The protein resides in the membrane. The sequence is that of Membrane selenoprotein (msp) from Dictyostelium discoideum (Social amoeba).